Reading from the N-terminus, the 1829-residue chain is MARLLPPTGTSVFRRFTPESLVEIERLIQEKSTREELEGAEEEPQAPSSDLEAGKCLPMIYGDPPGDLLNTPLEDIDPFYKTQKTFIVISKGNTIFRFSSEPAMFCISPFSIVRRGAIKILIHSLFSMFIMITILSNCVFMTMSNPPAWSKTVEYVFTGIYTFEATVKVLSRGFCIGPFTFLRDPWNWLDFMVISMAYVTEFVDLGNVSALRTFRVLRALKTITVIPGLKTIVGALIQSVKKMIDVMILTIFALAVFALIGLQLFMGNLRQKCIRWPILNSTIFDVYNSNMVNDTTLNVTDTFDFKAYINNEENQYFLEGSLDALLCGNSSDAGRCPEGYTCMKAGRNPNYGYTSYDNFGWAFLALFRLMTQDFWENLFQLTLRAAGKTYMIFFVVVIFLGSFYLINLILAVVAMAYDEQNEATLAEARDKEEEFQRLLEQLKNQETGSKASLASQKTQSRGSNRTGSLHDLADEDVIKDCNGRIVPRLIVNRVSSNKELSAEEDQKSLSSKHSMQYLDQPKLSKRTASALSVLTATMEGLEDAQRPCPPGWYKFADMFLKWDCCAPWILFKKWVHFVVMDPFVDLGITICIVLNTLFMAMEHYPMSPHFEHVLSVGNLVFTGIFTAEMVFKLIAMDPYYYFQVGWNIFDSIIVTLSLVELGLANVQGLSVLRSFRLLRVFKLAKSWPTLNMLIKIIGNSVGALGNLTLVLAIIVFIFAVVGMQLFGKSYKDCVCKISEDCELPRWHMNDFFHSFLIVFRILCGEWIETMWDCMEVAGASMCLIVFMMVMVIGNLVVLNLFLALLLSSFSGDNLSGGDDDGEMNNLQIAIGRITRGIDWVKALVASMVQRILGKKPDNTKEEGEGDIELYALNHLDEGKMADGLTNCLSPTLTVPIARCESDVEEDEDSESSDEEDAKATLNDGDSSVCSTVDYQPPEPEPEPEEVEEEEPEPEEPEACFTEGCIRRCACLSVDITEGWGKKWWNLRRTCFTIVEHDYFETFIIFMILLSSGALAFEDINIERRRVIKTILEYADKVFTYIFIVEMLLKWVAYGFKTYFTNAWCWLDFLIVDVSLVSLTANLMGYSELGAIKSLRTLRALRPLRALSRFEGMRVVVNALVGAIPSIFNVLLVCLIFWLIFSIMGVNLFAGKFYHCINTTTEERIPMDVVNNKSDCMALMYTNEVRWVNVKVNYDNVGLGYLSLLQIATFKGWMDIMYAAVDSREVDEQPSYEINLYMYLYFVIFIIFGSFFTLNLFIGVIIDNFNQQKSKFGGKDIFMTEEQKKYYNAMKKLGAKKRPKPIPRPSNIIQGLVFDFISKQFFDIFIMVLICLNMVTMMIETDDQSAEKEYVLYQINLVFIVVFTSECVLKLFALRQYFFTIGWNVFDFVVVILSIAGLMLSDIIEKYFVSPTLFRVIRLARIGRVLRLIRGAKGIRTLLFALMMSLPALFNIGLLLFLIMFIFSIFGMSNFAYVKKQAGIDDIFNFETFGGSIICLFEITTSAGWDGLLLPILNSGPPDCDPDFENPGTDVRGNCGNPGMGIMFFCSYIIMSFLVVVNMYIAIILENFNNAQEESGDPLCEDDFDMFDETWEKFDVDATQFIEYDRLFDFVDALQEPLRIAKPNRLKLISMDIPIVNGDKIHSQDILLAVTREVLGDTIEMDAMKESIEAKFIMNNPTSASFEPIITTLRRKEEERAAIAVQRIYRRHLLKRAIRYACFMRRSKRKVRNPNDNEPPETEGLIARKMNTLYGSNPELAMALELETRPMRPNSQPPKPSQVTQTRASVTFPRPQGQLILPVELTSEVILRSAPITHSLNSSENATTIKESIV.

At 1–124 the chain is on the cytoplasmic side; sequence MARLLPPTGT…RGAIKILIHS (124 aa). The tract at residues 32–52 is disordered; sequence STREELEGAEEEPQAPSSDLE. One copy of the I repeat lies at 106 to 421; sequence CISPFSIVRR…VVAMAYDEQN (316 aa). A helical membrane pass occupies residues 125-143; it reads LFSMFIMITILSNCVFMTM. At 144 to 150 the chain is on the extracellular side; the sequence is SNPPAWS. A helical transmembrane segment spans residues 151 to 171; the sequence is KTVEYVFTGIYTFEATVKVLS. The Cytoplasmic segment spans residues 172 to 185; the sequence is RGFCIGPFTFLRDP. A helical transmembrane segment spans residues 186–203; that stretch reads WNWLDFMVISMAYVTEFV. The Extracellular segment spans residues 204–209; the sequence is DLGNVS. Residue Asn-207 is glycosylated (N-linked (GlcNAc...) asparagine). A helical membrane pass occupies residues 210–226; that stretch reads ALRTFRVLRALKTITVI. Over 227 to 245 the chain is Cytoplasmic; it reads PGLKTIVGALIQSVKKMID. The chain crosses the membrane as a helical span at residues 246 to 265; sequence VMILTIFALAVFALIGLQLF. Topologically, residues 266–358 are extracellular; it reads MGNLRQKCIR…PNYGYTSYDN (93 aa). Cys-273 and Cys-327 form a disulfide bridge. 3 N-linked (GlcNAc...) asparagine glycosylation sites follow: Asn-280, Asn-293, and Asn-329. A disulfide bond links Cys-336 and Cys-342. Residues 359–383 constitute an intramembrane region (pore-forming); sequence FGWAFLALFRLMTQDFWENLFQLTL. Residues 384 to 390 are Extracellular-facing; that stretch reads RAAGKTY. A helical membrane pass occupies residues 391–411; it reads MIFFVVVIFLGSFYLINLILA. Residues 412-582 lie on the Cytoplasmic side of the membrane; it reads VVAMAYDEQN…KWVHFVVMDP (171 aa). Polar residues predominate over residues 446 to 467; the sequence is ETGSKASLASQKTQSRGSNRTG. Residues 446 to 468 form a disordered region; the sequence is ETGSKASLASQKTQSRGSNRTGS. One copy of the II repeat lies at 564-836; that stretch reads CCAPWILFKK…QIAIGRITRG (273 aa). A helical transmembrane segment spans residues 583–601; the sequence is FVDLGITICIVLNTLFMAM. At 602–612 the chain is on the extracellular side; sequence EHYPMSPHFEH. Residues 613-632 form a helical membrane-spanning segment; that stretch reads VLSVGNLVFTGIFTAEMVFK. Topologically, residues 633–646 are cytoplasmic; the sequence is LIAMDPYYYFQVGW. A helical membrane pass occupies residues 647–666; sequence NIFDSIIVTLSLVELGLANV. Residues 667–668 are Extracellular-facing; the sequence is QG. The helical transmembrane segment at 669–686 threads the bilayer; sequence LSVLRSFRLLRVFKLAKS. The Cytoplasmic segment spans residues 687-702; the sequence is WPTLNMLIKIIGNSVG. The chain crosses the membrane as a helical span at residues 703-721; the sequence is ALGNLTLVLAIIVFIFAVV. At 722–750 the chain is on the extracellular side; it reads GMQLFGKSYKDCVCKISEDCELPRWHMND. An intrachain disulfide couples Cys-735 to Cys-741. Residues 751–771 constitute an intramembrane region (pore-forming); sequence FFHSFLIVFRILCGEWIETMW. Residues 772–782 lie on the Extracellular side of the membrane; the sequence is DCMEVAGASMC. The cysteines at positions 773 and 782 are disulfide-linked. A helical transmembrane segment spans residues 783–801; that stretch reads LIVFMMVMVIGNLVVLNLF. Topologically, residues 802–998 are cytoplasmic; that stretch reads LALLLSSFSG…TCFTIVEHDY (197 aa). Positions 901 to 957 are disordered; it reads SDVEEDEDSESSDEEDAKATLNDGDSSVCSTVDYQPPEPEPEPEEVEEEEPEPEEPE. Over residues 902-916 the composition is skewed to acidic residues; the sequence is DVEEDEDSESSDEED. Residues 923 to 933 are compositionally biased toward polar residues; the sequence is DGDSSVCSTVD. Positions 939–957 are enriched in acidic residues; sequence PEPEPEEVEEEEPEPEEPE. An III repeat occupies 979 to 1292; it reads WGKKWWNLRR…KKYYNAMKKL (314 aa). Residues 999–1016 form a helical membrane-spanning segment; the sequence is FETFIIFMILLSSGALAF. Over 1017 to 1029 the chain is Extracellular; the sequence is EDINIERRRVIKT. Residues 1030-1048 form a helical membrane-spanning segment; it reads ILEYADKVFTYIFIVEMLL. Residues 1049 to 1062 are Cytoplasmic-facing; it reads KWVAYGFKTYFTNA. A helical transmembrane segment spans residues 1063 to 1081; that stretch reads WCWLDFLIVDVSLVSLTAN. Topologically, residues 1082–1089 are extracellular; sequence LMGYSELG. Residues 1090–1108 traverse the membrane as a helical segment; sequence AIKSLRTLRALRPLRALSR. Residues 1109 to 1125 are Cytoplasmic-facing; the sequence is FEGMRVVVNALVGAIPS. Residues 1126–1145 traverse the membrane as a helical segment; sequence IFNVLLVCLIFWLIFSIMGV. At 1146-1196 the chain is on the extracellular side; the sequence is NLFAGKFYHCINTTTEERIPMDVVNNKSDCMALMYTNEVRWVNVKVNYDNV. Cysteines 1155 and 1175 form a disulfide. N-linked (GlcNAc...) asparagine glycosylation is found at Asn-1157 and Asn-1171. Positions 1197-1218 form an intramembrane region, pore-forming; sequence GLGYLSLLQIATFKGWMDIMYA. At 1219–1235 the chain is on the extracellular side; the sequence is AVDSREVDEQPSYEINL. A helical transmembrane segment spans residues 1236-1257; it reads YMYLYFVIFIIFGSFFTLNLFI. The Cytoplasmic segment spans residues 1258 to 1320; sequence GVIIDNFNQQ…LVFDFISKQF (63 aa). Positions 1276-1278 are important for rapid channel inactivation; it reads IFM. The IV repeat unit spans residues 1301 to 1599; it reads IPRPSNIIQG…WEKFDVDATQ (299 aa). Residues 1321-1338 form a helical membrane-spanning segment; that stretch reads FDIFIMVLICLNMVTMMI. Residues 1339-1349 lie on the Extracellular side of the membrane; it reads ETDDQSAEKEY. Residues 1350 to 1368 traverse the membrane as a helical segment; that stretch reads VLYQINLVFIVVFTSECVL. The Cytoplasmic segment spans residues 1369–1380; the sequence is KLFALRQYFFTI. A helical membrane pass occupies residues 1381 to 1398; it reads GWNVFDFVVVILSIAGLM. Over 1399 to 1411 the chain is Extracellular; the sequence is LSDIIEKYFVSPT. A helical transmembrane segment spans residues 1412–1428; it reads LFRVIRLARIGRVLRLI. The Cytoplasmic portion of the chain corresponds to 1429–1447; it reads RGAKGIRTLLFALMMSLPA. The helical transmembrane segment at 1448-1465 threads the bilayer; the sequence is LFNIGLLLFLIMFIFSIF. Topologically, residues 1466 to 1487 are extracellular; sequence GMSNFAYVKKQAGIDDIFNFET. Positions 1488-1510 form an intramembrane region, pore-forming; it reads FGGSIICLFEITTSAGWDGLLLP. At 1511-1540 the chain is on the extracellular side; the sequence is ILNSGPPDCDPDFENPGTDVRGNCGNPGMG. Cys-1519 and Cys-1534 are disulfide-bonded. Residues 1541–1563 traverse the membrane as a helical segment; the sequence is IMFFCSYIIMSFLVVVNMYIAII. Topologically, residues 1564–1829 are cytoplasmic; it reads LENFNNAQEE…NATTIKESIV (266 aa). One can recognise an IQ domain in the interval 1693–1722; it reads EERAAIAVQRIYRRHLLKRAIRYACFMRRS. Residues 1765–1786 are disordered; it reads PMRPNSQPPKPSQVTQTRASVT.

Belongs to the sodium channel (TC 1.A.1.10) family. Nav1.4/SCN4A subfamily. Voltage-gated sodium (Nav) channels consist of an ion-conducting alpha subunit which is functional on its own associated with regulatory beta subunits. In terms of tissue distribution, expressed in skeletal muscle, brain, spinal cord, and eye.

It localises to the cell membrane. It catalyses the reaction Na(+)(in) = Na(+)(out). In terms of biological role, pore-forming subunit of a voltage-gated sodium (Nav) channel that directly mediates the depolarizing phase of action potentials in excitable membranes. Navs, also called VGSCs (voltage-gated sodium channels) or VDSCs (voltage-dependent sodium channels), operate by switching between closed and open conformations depending on the voltage difference across the membrane. In the open conformation they allow Na(+) ions to selectively pass through the pore, along their electrochemical gradient. The influx of Na+ ions provokes membrane depolarization, initiating the propagation of electrical signals throughout cells and tissues. This is Sodium channel protein type 4 subunit alpha A (scn4aa) from Danio rerio (Zebrafish).